A 548-amino-acid polypeptide reads, in one-letter code: Membrane protein insertase YidC (548 aa).

A helical membrane pass occupies residues 6–26 (NLLVIALLFVSFMIWQAWEQD). Residues 28–56 (NPQPQTQQTTQTTTTAAGSAADQGVPASG) are disordered. Over residues 29 to 42 (PQPQTQQTTQTTTT) the composition is skewed to low complexity. The next 4 helical transmembrane spans lie at 350–370 (FVGN…GIMY), 424–444 (FPLI…MGSI), 458–478 (LSAQ…MFFI), and 499–519 (PVIF…YYIV).

This sequence belongs to the OXA1/ALB3/YidC family. Type 1 subfamily. As to quaternary structure, interacts with the Sec translocase complex via SecD. Specifically interacts with transmembrane segments of nascent integral membrane proteins during membrane integration.

The protein localises to the cell inner membrane. Functionally, required for the insertion and/or proper folding and/or complex formation of integral membrane proteins into the membrane. Involved in integration of membrane proteins that insert both dependently and independently of the Sec translocase complex, as well as at least some lipoproteins. Aids folding of multispanning membrane proteins. The protein is Membrane protein insertase YidC of Salmonella paratyphi C (strain RKS4594).